The primary structure comprises 274 residues: Putative phosphatase BUsg_029 (274 aa).

Catalysis depends on Asp-8, which acts as the Nucleophile. Asp-8 provides a ligand contact to Mg(2+). Leu-9 is a binding site for phosphate. Asp-10 is a Mg(2+) binding site. Residues 42 to 43 (SG) and Lys-191 contribute to the phosphate site. Asp-214 lines the Mg(2+) pocket. Position 217 (Asn-217) interacts with phosphate.

It belongs to the HAD-like hydrolase superfamily. Cof family. The cofactor is Mg(2+).

The sequence is that of Putative phosphatase BUsg_029 from Buchnera aphidicola subsp. Schizaphis graminum (strain Sg).